A 391-amino-acid polypeptide reads, in one-letter code: Multidrug resistance protein MdtL (391 aa).

The next 12 membrane-spanning stretches (helical) occupy residues 4–24 (FLIC…MYLV), 42–62 (IAFS…GKVA), 69–89 (PVAI…SLAE), 93–113 (LFLA…VVAF), 131–151 (LLNG…HLIM), 158–178 (SLFW…LFIL), 203–222 (FFLS…LTFV), 245–265 (ALTA…LGIF), 269–289 (TLMI…AVSP), 293–313 (VSLF…GVAM), 331–351 (LGIA…VVGI), and 356–376 (MLIG…MFVA).

This sequence belongs to the major facilitator superfamily. DHA1 family. MdtL (TC 2.A.1.2.22) subfamily.

The protein resides in the cell inner membrane. Functionally, confers resistance to chloramphenicol. This is Multidrug resistance protein MdtL from Escherichia coli O45:K1 (strain S88 / ExPEC).